The sequence spans 707 residues: Vicilin-like seed storage protein At2g18540 (707 aa).

The N-terminal stretch at 1-24 is a signal peptide; the sequence is MSRFRILPLSIFLCFVSLFFCTES. The 144-residue stretch at 42–185 folds into the Cupin type-1 1 domain; the sequence is PLLVKKDQRT…AFAVPEDILR (144 aa). N-linked (GlcNAc...) asparagine glycans are attached at residues asparagine 60, asparagine 203, asparagine 285, asparagine 356, asparagine 396, and asparagine 399. Residues 247-403 enclose the Cupin type-1 2 domain; it reads FNVFEEDPDF…SFNLSNETIK (157 aa). The segment covering 439 to 696 has biased composition (basic and acidic residues); sequence EEEEIERRRK…KKEEEEEKRR (258 aa). The tract at residues 439 to 707 is disordered; it reads EEEEIERRRK…PPQPKPPEEI (269 aa). Pro residues predominate over residues 698–707; sequence PPQPKPPEEI.

The protein belongs to the 7S seed storage protein family.

In terms of biological role, seed storage protein. This chain is Vicilin-like seed storage protein At2g18540, found in Arabidopsis thaliana (Mouse-ear cress).